Here is a 1042-residue protein sequence, read N- to C-terminus: Carbamoyl phosphate synthase large chain (1042 aa).

The carboxyphosphate synthetic domain stretch occupies residues 1–417 (MTEDSRTILL…SLLKALRSSE (417 aa)). R127, R182, G188, G189, E221, I223, E228, G254, I255, H256, Q297, and E314 together coordinate ATP. The ATP-grasp 1 domain occupies 131–343 (RQRMADLGQP…IARVTAKVAL (213 aa)). 3 residues coordinate Mg(2+): Q297, E314, and N316. Mn(2+) is bound by residues Q297, E314, and N316. An oligomerization domain region spans residues 418–558 (YDPSVDWATV…SQGSTGSDVR (141 aa)). Residues 559 to 947 (ADRDAHSVVI…WKAQVAASNA (389 aa)) are carbamoyl phosphate synthetic domain. In terms of domain architecture, ATP-grasp 2 spans 689 to 880 (NRLLDERDIS…IAKLAAKVMA (192 aa)). Residues R725, E764, L766, E771, G796, V797, H798, S799, Q839, and E851 each contribute to the ATP site. Mg(2+) contacts are provided by Q839, E851, and N853. Q839, E851, and N853 together coordinate Mn(2+). In terms of domain architecture, MGS-like spans 947-1042 (APVPGSTAVV…DRPVNDETWG (96 aa)). The allosteric domain stretch occupies residues 948–1042 (PVPGSTAVVD…DRPVNDETWG (95 aa)).

This sequence belongs to the CarB family. As to quaternary structure, composed of two chains; the small (or glutamine) chain promotes the hydrolysis of glutamine to ammonia, which is used by the large (or ammonia) chain to synthesize carbamoyl phosphate. Tetramer of heterodimers (alpha,beta)4. The cofactor is Mg(2+). Mn(2+) serves as cofactor.

It catalyses the reaction hydrogencarbonate + L-glutamine + 2 ATP + H2O = carbamoyl phosphate + L-glutamate + 2 ADP + phosphate + 2 H(+). The catalysed reaction is hydrogencarbonate + NH4(+) + 2 ATP = carbamoyl phosphate + 2 ADP + phosphate + 2 H(+). The protein operates within amino-acid biosynthesis; L-arginine biosynthesis; carbamoyl phosphate from bicarbonate: step 1/1. It participates in pyrimidine metabolism; UMP biosynthesis via de novo pathway; (S)-dihydroorotate from bicarbonate: step 1/3. Its function is as follows. Large subunit of the glutamine-dependent carbamoyl phosphate synthetase (CPSase). CPSase catalyzes the formation of carbamoyl phosphate from the ammonia moiety of glutamine, carbonate, and phosphate donated by ATP, constituting the first step of 2 biosynthetic pathways, one leading to arginine and/or urea and the other to pyrimidine nucleotides. The large subunit (synthetase) binds the substrates ammonia (free or transferred from glutamine from the small subunit), hydrogencarbonate and ATP and carries out an ATP-coupled ligase reaction, activating hydrogencarbonate by forming carboxy phosphate which reacts with ammonia to form carbamoyl phosphate. The polypeptide is Carbamoyl phosphate synthase large chain (Halobacterium salinarum (strain ATCC 700922 / JCM 11081 / NRC-1) (Halobacterium halobium)).